The primary structure comprises 89 residues: MAHKKGVGSSRNGRESHSKRLGVKLFGGQAAIAGNIIVRQRGTQHHPGENVGIGKDHTLFALTDGVVTFRKGRQDRSFVSVLPVAEAKA.

It belongs to the bacterial ribosomal protein bL27 family.

This chain is Large ribosomal subunit protein bL27, found in Cytophaga hutchinsonii (strain ATCC 33406 / DSM 1761 / CIP 103989 / NBRC 15051 / NCIMB 9469 / D465).